A 163-amino-acid chain; its full sequence is Protein LOL5 (163 aa).

2 stretches are compositionally biased toward polar residues: residues 1–25 and 33–44; these read MSQL…QPQS and LQPQHPPSSTAH. Positions 1-51 are disordered; it reads MSQLPLASQATTTDLVSTTAMQPQSEGIVDESLQPQHPPSSTAHDSPCLQD. Putative zinc finger regions lie at residues 70-100 and 108-138; these read QMVC…MNYV and KVHC…VTEI.

Its subcellular location is the nucleus. Functionally, involved in plant growth and disease resistance. This Oryza sativa subsp. japonica (Rice) protein is Protein LOL5 (LOL5).